Here is a 214-residue protein sequence, read N- to C-terminus: Adenylate kinase (214 aa).

Residue Gly10 to Thr15 participates in ATP binding. The interval Ser30–Val59 is NMP. AMP is bound by residues Thr31, Arg36, Asn57–Val59, Gly83–Arg86, and Gln90. Residues Leu124–Asp161 form an LID region. Arg125 serves as a coordination point for ATP. 2 residues coordinate Zn(2+): Cys128 and Cys131. Ile134–Phe135 lines the ATP pocket. Zn(2+) is bound by residues Cys147 and Cys150. AMP contacts are provided by Arg158 and Arg169. Lys197 lines the ATP pocket.

Belongs to the adenylate kinase family. As to quaternary structure, monomer.

Its subcellular location is the cytoplasm. The enzyme catalyses AMP + ATP = 2 ADP. The protein operates within purine metabolism; AMP biosynthesis via salvage pathway; AMP from ADP: step 1/1. In terms of biological role, catalyzes the reversible transfer of the terminal phosphate group between ATP and AMP. Plays an important role in cellular energy homeostasis and in adenine nucleotide metabolism. The sequence is that of Adenylate kinase from Elusimicrobium minutum (strain Pei191).